Reading from the N-terminus, the 378-residue chain is Dual-specificity RNA methyltransferase RlmN (378 aa).

Glutamate 96 serves as the catalytic Proton acceptor. Residues 102–340 (DNGRGTLCVS…ATVRTTRGDD (239 aa)) enclose the Radical SAM core domain. A disulfide bridge connects residues cysteine 109 and cysteine 345. Residues cysteine 116, cysteine 120, and cysteine 123 each coordinate [4Fe-4S] cluster. S-adenosyl-L-methionine-binding positions include 170–171 (GE), serine 202, 224–226 (SLH), and asparagine 302. The active-site S-methylcysteine intermediate is the cysteine 345.

This sequence belongs to the radical SAM superfamily. RlmN family. Requires [4Fe-4S] cluster as cofactor.

Its subcellular location is the cytoplasm. It catalyses the reaction adenosine(2503) in 23S rRNA + 2 reduced [2Fe-2S]-[ferredoxin] + 2 S-adenosyl-L-methionine = 2-methyladenosine(2503) in 23S rRNA + 5'-deoxyadenosine + L-methionine + 2 oxidized [2Fe-2S]-[ferredoxin] + S-adenosyl-L-homocysteine. It carries out the reaction adenosine(37) in tRNA + 2 reduced [2Fe-2S]-[ferredoxin] + 2 S-adenosyl-L-methionine = 2-methyladenosine(37) in tRNA + 5'-deoxyadenosine + L-methionine + 2 oxidized [2Fe-2S]-[ferredoxin] + S-adenosyl-L-homocysteine. Functionally, specifically methylates position 2 of adenine 2503 in 23S rRNA and position 2 of adenine 37 in tRNAs. m2A2503 modification seems to play a crucial role in the proofreading step occurring at the peptidyl transferase center and thus would serve to optimize ribosomal fidelity. The polypeptide is Dual-specificity RNA methyltransferase RlmN (Hahella chejuensis (strain KCTC 2396)).